The primary structure comprises 207 residues: Large ribosomal subunit protein uL4 (207 aa).

The segment at 49 to 78 (HAVKNRSAVSGGGRKPWRQKGTGRARQGSI) is disordered.

It belongs to the universal ribosomal protein uL4 family. Part of the 50S ribosomal subunit.

Functionally, one of the primary rRNA binding proteins, this protein initially binds near the 5'-end of the 23S rRNA. It is important during the early stages of 50S assembly. It makes multiple contacts with different domains of the 23S rRNA in the assembled 50S subunit and ribosome. Its function is as follows. Forms part of the polypeptide exit tunnel. In Streptococcus pyogenes serotype M1, this protein is Large ribosomal subunit protein uL4 (rplD).